A 552-amino-acid chain; its full sequence is CTP synthase (552 aa).

The tract at residues 1-273 is amidoligase domain; sequence MSESKKNPET…LTPIARRFNM (273 aa). Residue S21 participates in CTP binding. S21 provides a ligand contact to UTP. Residues 22-27 and D79 each bind ATP; that span reads SLGKGI. Mg(2+) contacts are provided by D79 and E147. Residues 154–156, 194–199, and K230 each bind CTP; these read DIE and KTKPTQ. UTP is bound by residues 194–199 and K230; that span reads KTKPTQ. One can recognise a Glutamine amidotransferase type-1 domain in the interval 298-548; it reads TIAFVGKYLS…IQKSLELKKV (251 aa). Position 359 (G359) interacts with L-glutamine. The active-site Nucleophile; for glutamine hydrolysis is the C386. L-glutamine-binding positions include 387-390, E410, and R478; that span reads LGMQ. Residues H521 and E523 contribute to the active site.

The protein belongs to the CTP synthase family. In terms of assembly, homotetramer.

It catalyses the reaction UTP + L-glutamine + ATP + H2O = CTP + L-glutamate + ADP + phosphate + 2 H(+). The catalysed reaction is L-glutamine + H2O = L-glutamate + NH4(+). The enzyme catalyses UTP + NH4(+) + ATP = CTP + ADP + phosphate + 2 H(+). The protein operates within pyrimidine metabolism; CTP biosynthesis via de novo pathway; CTP from UDP: step 2/2. With respect to regulation, allosterically activated by GTP, when glutamine is the substrate; GTP has no effect on the reaction when ammonia is the substrate. The allosteric effector GTP functions by stabilizing the protein conformation that binds the tetrahedral intermediate(s) formed during glutamine hydrolysis. Inhibited by the product CTP, via allosteric rather than competitive inhibition. Catalyzes the ATP-dependent amination of UTP to CTP with either L-glutamine or ammonia as the source of nitrogen. Regulates intracellular CTP levels through interactions with the four ribonucleotide triphosphates. The sequence is that of CTP synthase from Wolinella succinogenes (strain ATCC 29543 / DSM 1740 / CCUG 13145 / JCM 31913 / LMG 7466 / NCTC 11488 / FDC 602W) (Vibrio succinogenes).